The following is a 185-amino-acid chain: Small ribosomal subunit protein uS4 (185 aa).

One can recognise an S4 RNA-binding domain in the interval 107–179 (RRLQTLVYRK…NGRRKRKNNH (73 aa)). A disordered region spans residues 161-185 (NTPLTNPEINGRRKRKNNHAGKEDN).

The protein belongs to the universal ribosomal protein uS4 family.

The chain is Small ribosomal subunit protein uS4 from Entamoeba histolytica (strain ATCC 30459 / HM-1:IMSS / ABRM).